The following is a 146-amino-acid chain: Large ribosomal subunit protein uL15 (146 aa).

Residues 1 to 66 (MKLHELKPAP…LQRRMPKRGF (66 aa)) are disordered. Composition is skewed to gly residues over residues 21–31 (QGIGSGMGKTA) and 42–52 (SGGGVRPGFEG).

This sequence belongs to the universal ribosomal protein uL15 family. Part of the 50S ribosomal subunit.

Functionally, binds to the 23S rRNA. This chain is Large ribosomal subunit protein uL15, found in Pelotomaculum thermopropionicum (strain DSM 13744 / JCM 10971 / SI).